Consider the following 141-residue polypeptide: Hemoglobin subunit alpha (141 aa).

Positions 1 to 141 (VLSPADKTNV…VSTVLTSKYR (141 aa)) constitute a Globin domain. Residue S3 is modified to Phosphoserine. K7 bears the N6-succinyllysine mark. The residue at position 8 (T8) is a Phosphothreonine. K11 carries the N6-succinyllysine modification. N6-acetyllysine; alternate is present on K16. Position 16 is an N6-succinyllysine; alternate (K16). Position 24 is a phosphotyrosine (Y24). Residue K40 is modified to N6-succinyllysine. H58 contacts O2. Residue H87 participates in heme b binding. S102 is subject to Phosphoserine. Phosphothreonine is present on T108. 2 positions are modified to phosphoserine: S124 and S131. T134 and T137 each carry phosphothreonine. S138 bears the Phosphoserine mark.

This sequence belongs to the globin family. As to quaternary structure, heterotetramer of two alpha chains and two beta chains. Red blood cells.

Functionally, involved in oxygen transport from the lung to the various peripheral tissues. Hemopressin acts as an antagonist peptide of the cannabinoid receptor CNR1. Hemopressin-binding efficiently blocks cannabinoid receptor CNR1 and subsequent signaling. The chain is Hemoglobin subunit alpha (HBA) from Tursiops truncatus (Atlantic bottle-nosed dolphin).